A 262-amino-acid polypeptide reads, in one-letter code: Serine O-acetyltransferase (262 aa).

Catalysis depends on Cys107, which acts as the Acyl-thioester intermediate. Lys128 contributes to the substrate binding site. The active-site Proton acceptor is His200. The active site involves Glu202. Arg214 is a binding site for substrate.

This sequence belongs to the MetA family.

It is found in the cytoplasm. It catalyses the reaction L-serine + acetyl-CoA = O-acetyl-L-serine + CoA. The catalysed reaction is L-homoserine + acetyl-CoA = O-acetyl-L-homoserine + CoA. Its pathway is amino-acid biosynthesis; L-cysteine biosynthesis; L-cysteine from L-serine: step 1/2. Functionally, transfers an acetyl group from acetyl-CoA to L-serine, forming acetyl-L-serine. In vitro, also has homoserine acetyl transferase activity. The protein is Serine O-acetyltransferase of Lactobacillus acidophilus.